The chain runs to 499 residues: Lysine--tRNA ligase (499 aa).

Positions 408 and 415 each coordinate Mg(2+).

This sequence belongs to the class-II aminoacyl-tRNA synthetase family. As to quaternary structure, homodimer. Mg(2+) is required as a cofactor.

It localises to the cytoplasm. It carries out the reaction tRNA(Lys) + L-lysine + ATP = L-lysyl-tRNA(Lys) + AMP + diphosphate. This is Lysine--tRNA ligase from Bacillus cytotoxicus (strain DSM 22905 / CIP 110041 / 391-98 / NVH 391-98).